Here is a 118-residue protein sequence, read N- to C-terminus: Small ribosomal subunit protein uS13 (118 aa).

Residues 94–118 form a disordered region; sequence SLPLRGQRTKTNARTRKGPRKPIKK.

The protein belongs to the universal ribosomal protein uS13 family. In terms of assembly, part of the 30S ribosomal subunit. Forms a loose heterodimer with protein S19. Forms two bridges to the 50S subunit in the 70S ribosome.

Located at the top of the head of the 30S subunit, it contacts several helices of the 16S rRNA. In the 70S ribosome it contacts the 23S rRNA (bridge B1a) and protein L5 of the 50S subunit (bridge B1b), connecting the 2 subunits; these bridges are implicated in subunit movement. Contacts the tRNAs in the A and P-sites. This chain is Small ribosomal subunit protein uS13, found in Colwellia psychrerythraea (strain 34H / ATCC BAA-681) (Vibrio psychroerythus).